Reading from the N-terminus, the 173-residue chain is MAAGSGGGTVGLVLPRVASLSGLDGAPTVPEGSDKALMHLGDPPRRCDTHPDGTSSAAAALVLRRIDVHPLLTGLGRGRQTVSLRNGHLVATANRAILSRRRSRLTRGRSFTSHLITSCPRLDDHQHRHPTRCRAEHAGCTVATCIPNAHDPAPGHQTPRWGPFRLKPAYTRI.

This is an uncharacterized protein from Mycobacterium tuberculosis (strain CDC 1551 / Oshkosh).